The chain runs to 112 residues: uncharacterized protein (112 aa).

Transmembrane regions (helical) follow at residues 7–26 and 36–58; these read PSFH…TLDY and TYMH…FFLY.

The protein localises to the membrane. This is an uncharacterized protein from Saccharomyces cerevisiae (strain ATCC 204508 / S288c) (Baker's yeast).